The sequence spans 138 residues: Small ribosomal subunit protein uS11 (138 aa).

Disordered stretches follow at residues 1 to 29 (MPPK…PHGA) and 117 to 138 (GAIS…RRRV). Residues 13 to 22 (KGQKTRRREK) are compositionally biased toward basic residues.

This sequence belongs to the universal ribosomal protein uS11 family. As to quaternary structure, part of the 30S ribosomal subunit. Interacts with proteins S7 and S18. Binds to IF-3.

Its function is as follows. Located on the platform of the 30S subunit, it bridges several disparate RNA helices of the 16S rRNA. Forms part of the Shine-Dalgarno cleft in the 70S ribosome. The protein is Small ribosomal subunit protein uS11 of Mycobacterium ulcerans (strain Agy99).